The sequence spans 377 residues: Alternative oxidase, mitochondrial (377 aa).

A helical transmembrane segment spans residues 149 to 169; that stretch reads LSRFIFLESIAAVPGMVAGML. Fe cation is bound by residues glutamate 156, glutamate 195, and histidine 198. The chain crosses the membrane as a helical span at residues 214–234; the sequence is ILIIGAQGVYFNAMFVAYLIS. Glutamate 246, glutamate 303, and histidine 306 together coordinate Fe cation.

This sequence belongs to the alternative oxidase family. Requires Fe cation as cofactor.

Its subcellular location is the mitochondrion inner membrane. Catalyzes cyanide-resistant oxygen consumption. May increase respiration when the cytochrome respiratory pathway is restricted, or in response to low temperatures. This is Alternative oxidase, mitochondrial (AOX1) from Pyricularia oryzae (strain 70-15 / ATCC MYA-4617 / FGSC 8958) (Rice blast fungus).